We begin with the raw amino-acid sequence, 92 residues long: Large ribosomal subunit protein bL27 (92 aa).

The disordered stretch occupies residues 1–26 (MAHKKGASSSSNGRDSESKRLGVKRF).

It belongs to the bacterial ribosomal protein bL27 family.

This is Large ribosomal subunit protein bL27 from Corynebacterium aurimucosum (strain ATCC 700975 / DSM 44827 / CIP 107346 / CN-1) (Corynebacterium nigricans).